The following is an 864-amino-acid chain: DNA mismatch repair protein MutS (864 aa).

Residue 607-614 participates in ATP binding; it reads GPNMGGKS.

The protein belongs to the DNA mismatch repair MutS family.

Functionally, this protein is involved in the repair of mismatches in DNA. It is possible that it carries out the mismatch recognition step. This protein has a weak ATPase activity. The chain is DNA mismatch repair protein MutS from Neisseria gonorrhoeae (strain NCCP11945).